Here is a 1474-residue protein sequence, read N- to C-terminus: Adhesion G protein-coupled receptor L1 (1474 aa).

Positions 1–24 are cleaved as a signal peptide; the sequence is MARLAAVLWNLCVTAVLVTSATQG. At 25–858 the chain is on the extracellular side; the sequence is LSRAGLPFGL…EIYQGRINEL (834 aa). The region spanning 40 to 129 is the SUEL-type lectin domain; the sequence is ACEGYPIELR…KYLEVQYDCV (90 aa). 5 cysteine pairs are disulfide-bonded: cysteine 41/cysteine 71, cysteine 50/cysteine 128, cysteine 83/cysteine 115, cysteine 96/cysteine 102, and cysteine 140/cysteine 322. Glutamate 42 contributes to the alpha-L-rhamnose binding site. Asparagine 98 carries N-linked (GlcNAc...) asparagine glycosylation. 117–120 contacts alpha-L-rhamnose; it reads GTYK. The 260-residue stretch at 139 to 398 folds into the Olfactomedin-like domain; that stretch reads VCPGTLQKVL…VVRYSLEFGP (260 aa). Residues 400-434 form a disordered region; sequence DPSAGPATSPPLSTTTTARPTPLTSTASPAATTPL. The segment covering 405 to 434 has biased composition (low complexity); the sequence is PATSPPLSTTTTARPTPLTSTASPAATTPL. Intrachain disulfides connect cysteine 480–cysteine 515 and cysteine 503–cysteine 532. Residues asparagine 531, asparagine 640, asparagine 742, asparagine 801, asparagine 806, and asparagine 827 are each glycosylated (N-linked (GlcNAc...) asparagine). The GAIN-B domain maps to 669 to 851; that stretch reads PARFLAAKEN…AVLMAHREIY (183 aa). Cystine bridges form between cysteine 802–cysteine 833 and cysteine 821–cysteine 835. The interval 802 to 851 is GPS; sequence CSFWNYSERSMLGYWSTQGCRLVESNKTHTTCACSHLTNFAVLMAHREIY. The chain crosses the membrane as a helical span at residues 859–879; that stretch reads LLSVITWVGIVISLVCLAICI. The Cytoplasmic segment spans residues 880–893; that stretch reads STFCFLRGLQTDRN. The chain crosses the membrane as a helical span at residues 894-914; it reads TIHKNLCINLFLAELLFLVGI. At 915–920 the chain is on the extracellular side; the sequence is DKTQYE. The helical transmembrane segment at 921–941 threads the bilayer; the sequence is IACPIFAGLLHYFFLAAFSWL. The Cytoplasmic portion of the chain corresponds to 942–964; sequence CLEGVHLYLLLVEVFESEYSRTK. Residues 965–985 form a helical membrane-spanning segment; sequence YYYLGGYCFPALVVGIAAAID. Residues 986 to 1002 lie on the Extracellular side of the membrane; it reads YRSYGTEKACWLRVDNY. The chain crosses the membrane as a helical span at residues 1003–1023; it reads FIWSFIGPVSFVIVVNLVFLM. Residues 1024-1050 lie on the Cytoplasmic side of the membrane; sequence VTLHKMIRSSSVLKPDSSRLDNIKSWA. A helical membrane pass occupies residues 1051-1071; it reads LGAIALLFLLGLTWAFGLLFI. Topologically, residues 1072–1075 are extracellular; that stretch reads NKES. A helical membrane pass occupies residues 1076 to 1096; that stretch reads VVMAYLFTTFNAFQGVFIFVF. The Cytoplasmic segment spans residues 1097–1474; that stretch reads HCALQKKVHK…DGQMQLVTSL (378 aa). Arginine 1194 carries the post-translational modification Omega-N-methylarginine. Serine 1220 bears the Phosphoserine mark. Disordered regions lie at residues 1248-1273, 1294-1328, 1360-1429, and 1451-1474; these read FNNS…RGRN, RGSS…PGGA, ESES…SRPP, and YLAA…VTSL. Pro residues-rich tracts occupy residues 1302–1314 and 1408–1420; these read GPPP…PPVP and ALPP…PGPP. Position 1473 is a phosphoserine (serine 1473).

Belongs to the G-protein coupled receptor 2 family. Adhesion G-protein coupled receptor (ADGR) subfamily. Forms a heterodimer, consisting of a large extracellular region (p120) non-covalently linked to a seven-transmembrane moiety (p85). Interacts with syntaxin and with proteins of the SHANK family via the PDZ domain. Interacts (via extracellular domain) with FLRT1, FLRT2 and FLRT3 (via extracellular domain). In terms of processing, autoproteolytically cleaved into 2 subunits, an extracellular subunit and a seven-transmembrane subunit. This proteolytic processing takes place early in the biosynthetic pathway, either in the endoplasmic reticulum or in the early compartment of the Golgi apparatus.

The protein resides in the cell membrane. Its subcellular location is the cell projection. It localises to the axon. The protein localises to the growth cone. It is found in the synapse. The protein resides in the presynaptic cell membrane. Its subcellular location is the synaptosome. Its function is as follows. Calcium-independent receptor of high affinity for alpha-latrotoxin, an excitatory neurotoxin present in black widow spider venom which triggers massive exocytosis from neurons and neuroendocrine cells. Receptor for TENM2 that mediates heterophilic synaptic cell-cell contact and postsynaptic specialization. Receptor probably implicated in the regulation of exocytosis. The chain is Adhesion G protein-coupled receptor L1 from Homo sapiens (Human).